The sequence spans 838 residues: V-type proton ATPase 116 kDa subunit a 1 (838 aa).

The Cytoplasmic portion of the chain corresponds to 1-388 (MGELFRSEEM…DAYGIGTYRE (388 aa)). Phosphothreonine occurs at positions 250 and 360. Position 364 is a phosphotyrosine (Tyr-364). The helical transmembrane segment at 389 to 407 (INPAPYTVITFPFLFAVMF) threads the bilayer. The Vacuolar segment spans residues 408–409 (GD). The chain crosses the membrane as a helical span at residues 410–426 (FGHGILMTLFAVWMVLR). Residues 427-441 (ESRILSQKNENEMFS) lie on the Cytoplasmic side of the membrane. Residues 442 to 471 (MVFSGRYIILLMGLFSIYTGLIYNDCFSKS) traverse the membrane as a helical segment. Residues 472–535 (LNIFGSSWSV…ATNKLTFLNS (64 aa)) are Vacuolar-facing. The chain crosses the membrane as a helical span at residues 536–555 (FKMKMSVILGIIHMLFGVSL). The Cytoplasmic portion of the chain corresponds to 556-573 (SLFNHIYFKKPLNIYFGF). A helical membrane pass occupies residues 574–594 (IPEIIFMSSLFGYLVILIFYK). Topologically, residues 595-639 (WTAYDAHSSRNAPSLLIHFINMFLFSYPESGNAMLYSGQKGIQCF) are vacuolar. A helical membrane pass occupies residues 640 to 659 (LIVVAMLCVPWMLLFKPLIL). At 660–725 (RHQYLRKKHL…DTMVHQAIHT (66 aa)) the chain is on the cytoplasmic side. Residues 726–750 (IEYCLGCISNTASYLRLWALSLAHA) form a helical membrane-spanning segment. At 751 to 771 (QLSEVLWTMVIHIGLHVRSLA) the chain is on the vacuolar side. A helical transmembrane segment spans residues 772–810 (GGLGLFFIFAAFATLTVAILLIMEGLSAFLHALRLHWVE). The Cytoplasmic segment spans residues 811–838 (FQNKFYTGTGFKFLPFSFEHIREGKFDE).

The protein belongs to the V-ATPase 116 kDa subunit family. As to quaternary structure, V-ATPase is a heteromultimeric enzyme made up of two complexes: the ATP-hydrolytic V1 complex and the proton translocation V0 complex. The V1 complex consists of three catalytic AB heterodimers that form a heterohexamer, three peripheral stalks each consisting of EG heterodimers, one central rotor including subunits D and F, and the regulatory subunits C and H. The proton translocation complex V0 consists of the proton transport subunit a, a ring of proteolipid subunits c9c'', rotary subunit d, subunits e and f, and the accessory subunits ATP6AP1/Ac45 and ATP6AP2/PRR. Interacts with SPAAR. In terms of tissue distribution, expressed in brain (at protein level). As to expression, expressed in heart, kidney, liver, spleen, and to a lesser extent in brain.

Its subcellular location is the cytoplasmic vesicle. It localises to the clathrin-coated vesicle membrane. The protein resides in the secretory vesicle. The protein localises to the synaptic vesicle membrane. It is found in the melanosome. In terms of biological role, subunit of the V0 complex of vacuolar(H+)-ATPase (V-ATPase), a multisubunit enzyme composed of a peripheral complex (V1) that hydrolyzes ATP and a membrane integral complex (V0) that translocates protons. V-ATPase is responsible for the acidification of various organelles, such as lysosomes, endosomes, the trans-Golgi network, and secretory granules, including synaptic vesicles. In certain cell types, can be exported to the plasma membrane, where it is involved in the acidification of the extracellular environment. Required for assembly and activity of the vacuolar ATPase. Through its action on compartment acidification, plays an essential role in neuronal development in terms of integrity and connectivity of neurons. This chain is V-type proton ATPase 116 kDa subunit a 1 (Atp6v0a1), found in Rattus norvegicus (Rat).